Reading from the N-terminus, the 381-residue chain is S-adenosylmethionine synthase (381 aa).

Position 15 (His-15) interacts with ATP. Asp-17 is a Mg(2+) binding site. Glu-43 contributes to the K(+) binding site. L-methionine-binding residues include Glu-56 and Gln-99. The segment at 99 to 109 is flexible loop; it reads QSPDINQGVDR. Residues 164–166, 230–231, Asp-239, 245–246, Ala-262, and Lys-266 contribute to the ATP site; these read DAK, RF, and RK. An L-methionine-binding site is contributed by Asp-239. Lys-270 lines the L-methionine pocket.

It belongs to the AdoMet synthase family. As to quaternary structure, homotetramer; dimer of dimers. The cofactor is Mg(2+). Requires K(+) as cofactor.

Its subcellular location is the cytoplasm. It catalyses the reaction L-methionine + ATP + H2O = S-adenosyl-L-methionine + phosphate + diphosphate. It participates in amino-acid biosynthesis; S-adenosyl-L-methionine biosynthesis; S-adenosyl-L-methionine from L-methionine: step 1/1. Its function is as follows. Catalyzes the formation of S-adenosylmethionine (AdoMet) from methionine and ATP. The overall synthetic reaction is composed of two sequential steps, AdoMet formation and the subsequent tripolyphosphate hydrolysis which occurs prior to release of AdoMet from the enzyme. In Alteromonas mediterranea (strain DSM 17117 / CIP 110805 / LMG 28347 / Deep ecotype), this protein is S-adenosylmethionine synthase.